Reading from the N-terminus, the 182-residue chain is Adenine phosphoribosyltransferase (182 aa).

The protein belongs to the purine/pyrimidine phosphoribosyltransferase family. As to quaternary structure, homodimer.

The protein resides in the cytoplasm. It catalyses the reaction AMP + diphosphate = 5-phospho-alpha-D-ribose 1-diphosphate + adenine. It functions in the pathway purine metabolism; AMP biosynthesis via salvage pathway; AMP from adenine: step 1/1. Functionally, catalyzes a salvage reaction resulting in the formation of AMP, that is energically less costly than de novo synthesis. The polypeptide is Adenine phosphoribosyltransferase (Pseudomonas fluorescens (strain SBW25)).